A 517-amino-acid chain; its full sequence is Glutamate--cysteine ligase (517 aa).

Belongs to the glutamate--cysteine ligase type 1 family. Type 1 subfamily.

It catalyses the reaction L-cysteine + L-glutamate + ATP = gamma-L-glutamyl-L-cysteine + ADP + phosphate + H(+). The protein operates within sulfur metabolism; glutathione biosynthesis; glutathione from L-cysteine and L-glutamate: step 1/2. The protein is Glutamate--cysteine ligase of Pectobacterium atrosepticum (strain SCRI 1043 / ATCC BAA-672) (Erwinia carotovora subsp. atroseptica).